Reading from the N-terminus, the 837-residue chain is MPNSAGVEVARISVKVSPNTKEFRRELKTDLEKIERELSADVPVNADLNAAQAKADFKRLMMQLKTEAARGVNIPVDVNVDKDTKGGFLSRLLGGKKGLSSLGDDAAKASSQVQHLGKSFLDLTRTAWIGVGIVAIAAPLVGLVAGLLAGLPSLLSAFGAGAGVVALGMDGIKAAAETMMPALEAAKTAVSSTFQTGLTPVFQQLGGLLTTLTPNLQNVATGIVNIAKGFTDVVSQGPGLQQLQNILDRTGEFFTGLGPVISTGTQAFLTLSNAGANAFGHLLAPLQEFANGFNDMVNRVTSNGVFDGAMQGLSQTLGSILNLFNRLMESGLQAMGQLGGPLSTLVNGIGDLFIALMPALTSVSSLLGNVLGTLGTQLAPIITALTPAFTTLADTLGTMLTGALQALGPVLTVVAETLGTALTTALQAIQPMLPTLVDSFKQLSETLVTSLGPYLPQIGEAFGQIVGAVIQLAPTIISSLIPAFQTLIPAIAQLAPSLVQIVQAFTKLMPVIVPVVQIVINLAAAVVQAGASIASFLIGGISRLVGVLADCVGAVAEWVGSWSSGVQQVSDFVGQLPGKIKSWFDDAGSWLIEAGKNVVQGLINGIGSMISSAVSKAKELASSVKNAVTGFLGIHSPSRVFAEIGQFTAEGFGNGFEEGFQPVIEKAKALAAELSQAMESGVDPSGILAGISTKELKQYSAALEQERKRIQVEKNAIPKEDKAGRAALQAQLDQIKAQKDILAYQRDRIKNEEDYVGAAGDDPLVKAASGLMNAPVDFAKATGKQFLTDLGISGDGAISKAITEGIQYIFQIGSVDEALSIKDREESKNALSVVGRA.

This Mycobacterium phage D29 (Mycobacteriophage D29) protein is Minor tail protein Gp26 (26).